Here is an 86-residue protein sequence, read N- to C-terminus: Small ribosomal subunit protein uS17 (86 aa).

Belongs to the universal ribosomal protein uS17 family. As to quaternary structure, part of the 30S ribosomal subunit.

Functionally, one of the primary rRNA binding proteins, it binds specifically to the 5'-end of 16S ribosomal RNA. The chain is Small ribosomal subunit protein uS17 from Streptococcus pyogenes serotype M3 (strain ATCC BAA-595 / MGAS315).